The chain runs to 418 residues: Zinc finger protein 566 (418 aa).

Positions 6–77 (VMFSDVSVDF…DRELTRGQWP (72 aa)) constitute a KRAB domain. The C2H2-type 1; degenerate zinc-finger motif lies at 169–193 (KFCASKEYRKTFRHGSQFATHEIIH). 7 C2H2-type zinc fingers span residues 199 to 221 (YECK…QKIH), 227 to 249 (FECK…HRIH), 255 to 277 (YECK…QRIH), 283 to 305 (YECK…QRIH), 311 to 333 (YECK…QRIH), 339 to 361 (YECK…QRIH), and 367 to 389 (YECK…HRIH). Glycyl lysine isopeptide (Lys-Gly) (interchain with G-Cter in SUMO2) cross-links involve residues Lys314 and Lys328.

This sequence belongs to the krueppel C2H2-type zinc-finger protein family.

It localises to the nucleus. Functionally, may be involved in transcriptional regulation. The sequence is that of Zinc finger protein 566 (ZNF566) from Homo sapiens (Human).